We begin with the raw amino-acid sequence, 424 residues long: Histidine--tRNA ligase (424 aa).

Belongs to the class-II aminoacyl-tRNA synthetase family. Homodimer.

The protein localises to the cytoplasm. It catalyses the reaction tRNA(His) + L-histidine + ATP = L-histidyl-tRNA(His) + AMP + diphosphate + H(+). The chain is Histidine--tRNA ligase from Bacillus velezensis (strain DSM 23117 / BGSC 10A6 / LMG 26770 / FZB42) (Bacillus amyloliquefaciens subsp. plantarum).